The following is a 1186-amino-acid chain: Major DNA-binding protein (1186 aa).

The segment at 495 to 508 (CCLCSLDNRHSCAH) is a zinc-finger region. Residues 839–840 (FW) carry the Required for filament formation motif. Residues 1160–1186 (RRRPLACSDLFGDAPAEKRNDLTLDML) are required for nuclear localization.

This sequence belongs to the herpesviridae major DNA-binding protein family. Homooligomers. Forms double-helical filaments necessary for the formation of replication compartments within the host nucleus. Interacts with the origin-binding protein. Interacts with the helicase primase complex; this interaction stimulates primer synthesis activity of the helicase-primase complex. Interacts with the DNA polymerase. Interacts with the alkaline exonuclease; this interaction increases its nuclease processivity.

It is found in the host nucleus. Plays several crucial roles in viral infection. Participates in the opening of the viral DNA origin to initiate replication by interacting with the origin-binding protein. May disrupt loops, hairpins and other secondary structures present on ssDNA to reduce and eliminate pausing of viral DNA polymerase at specific sites during elongation. Promotes viral DNA recombination by performing strand-transfer, characterized by the ability to transfer a DNA strand from a linear duplex to a complementary single-stranded DNA circle. Can also catalyze the renaturation of complementary single strands. Additionally, reorganizes the host cell nucleus, leading to the formation of prereplicative sites and replication compartments. This process is driven by the protein which can form double-helical filaments in the absence of DNA. This is Major DNA-binding protein from Bovine herpesvirus 2 (strain BMV) (BoHV-2).